The chain runs to 144 residues: Urease subunit beta (144 aa).

Residues 110 to 119 (HAAPAAPAIP) are compositionally biased toward low complexity. Positions 110–144 (HAAPAAPAIPARHESAAGDAPSPLKERAGFDNETR) are disordered. The span at 133–144 (LKERAGFDNETR) shows a compositional bias: basic and acidic residues.

The protein belongs to the urease beta subunit family. In terms of assembly, heterotrimer of UreA (gamma), UreB (beta) and UreC (alpha) subunits. Three heterotrimers associate to form the active enzyme.

It is found in the cytoplasm. The catalysed reaction is urea + 2 H2O + H(+) = hydrogencarbonate + 2 NH4(+). It participates in nitrogen metabolism; urea degradation; CO(2) and NH(3) from urea (urease route): step 1/1. The chain is Urease subunit beta from Micrococcus luteus (strain ATCC 4698 / DSM 20030 / JCM 1464 / CCM 169 / CCUG 5858 / IAM 1056 / NBRC 3333 / NCIMB 9278 / NCTC 2665 / VKM Ac-2230) (Micrococcus lysodeikticus).